The sequence spans 213 residues: ATP synthase peripheral stalk subunit OSCP, mitochondrial (213 aa).

Residues 1–23 constitute a mitochondrion transit peptide; the sequence is MAAPAVSGLSRQVRYFSTSVVRP. An SIFI-degron motif is present at residues 5-23; that stretch reads AVSGLSRQVRYFSTSVVRP. N6-acetyllysine occurs at positions 54, 60, 70, and 73. Lys-90 bears the N6-succinyllysine mark. N6-acetyllysine; alternate is present on residues Lys-158 and Lys-162. N6-succinyllysine; alternate is present on residues Lys-158 and Lys-162. 3 positions are modified to N6-acetyllysine: Lys-172, Lys-176, and Lys-192. Lys-199 carries the post-translational modification N6-succinyllysine.

The protein belongs to the ATPase delta chain family. As to quaternary structure, component of the ATP synthase complex composed at least of ATP5F1A/subunit alpha, ATP5F1B/subunit beta, ATP5MC1/subunit c (homooctomer), MT-ATP6/subunit a, MT-ATP8/subunit 8, ATP5ME/subunit e, ATP5MF/subunit f, ATP5MG/subunit g, ATP5MK/subunit k, ATP5MJ/subunit j, ATP5F1C/subunit gamma, ATP5F1D/subunit delta, ATP5F1E/subunit epsilon, ATP5PF/subunit F6, ATP5PB/subunit b, ATP5PD/subunit d, ATP5PO/subunit OSCP. ATP synthase complex consists of a soluble F(1) head domain (subunits alpha(3) and beta(3)) - the catalytic core - and a membrane F(0) domain - the membrane proton channel (subunits c, a, 8, e, f, g, k and j). These two domains are linked by a central stalk (subunits gamma, delta, and epsilon) rotating inside the F1 region and a stationary peripheral stalk (subunits F6, b, d, and OSCP). In terms of processing, acetylation at Lys-162 decreases ATP production. Deacetylated by SIRT3. In response to mitochondrial stress, the precursor protein is ubiquitinated by the SIFI complex in the cytoplasm before mitochondrial import, leading to its degradation. Within the SIFI complex, UBR4 initiates ubiquitin chain that are further elongated or branched by KCMF1.

The protein resides in the mitochondrion. The protein localises to the mitochondrion inner membrane. Subunit OSCP, of the mitochondrial membrane ATP synthase complex (F(1)F(0) ATP synthase or Complex V) that produces ATP from ADP in the presence of a proton gradient across the membrane which is generated by electron transport complexes of the respiratory chain. ATP synthase complex consist of a soluble F(1) head domain - the catalytic core - and a membrane F(1) domain - the membrane proton channel. These two domains are linked by a central stalk rotating inside the F(1) region and a stationary peripheral stalk. During catalysis, ATP synthesis in the catalytic domain of F(1) is coupled via a rotary mechanism of the central stalk subunits to proton translocation. In vivo, can only synthesize ATP although its ATP hydrolase activity can be activated artificially in vitro. Part of the complex F(0) domain. Part of the complex F(0) domain and the peripheric stalk, which acts as a stator to hold the catalytic alpha(3)beta(3) subcomplex and subunit a/ATP6 static relative to the rotary elements. This chain is ATP synthase peripheral stalk subunit OSCP, mitochondrial, found in Plecturocebus moloch (Dusky titi monkey).